The primary structure comprises 92 residues: Ig kappa chain V region 3381 (92 aa).

Residues 1–23 form a framework-1 region; sequence AFELTQTPASVEAAVGGTVTINC. The tract at residues 24–34 is complementarity-determining-1; it reads QASESISNWLA. A framework-2 region spans residues 35–49; sequence WYQQKPGQPXKLLIY. The tract at residues 50 to 56 is complementarity-determining-2; it reads KASTLAS. The interval 57-88 is framework-3; the sequence is GVSSRFKGSGSGTQFTLTISDLECADAATYYC. The interval 89 to 92 is complementarity-determining-3; sequence QSTD.

This Oryctolagus cuniculus (Rabbit) protein is Ig kappa chain V region 3381.